The primary structure comprises 202 residues: UPF0637 protein Exig_2520 (202 aa).

This sequence belongs to the UPF0637 family.

The chain is UPF0637 protein Exig_2520 from Exiguobacterium sibiricum (strain DSM 17290 / CCUG 55495 / CIP 109462 / JCM 13490 / 255-15).